A 92-amino-acid chain; its full sequence is uncharacterized protein (92 aa).

In terms of domain architecture, HTH cro/C1-type spans 25–83 (LEEKLKQEKIDRKYLAQVTNIPYTTVSRIMRAEANREFNPEIDTILKIAKYFNCTMDEV). The H-T-H motif DNA-binding region spans 36 to 55 (RKYLAQVTNIPYTTVSRIMR).

This is an uncharacterized protein from Rickettsia prowazekii (strain Madrid E).